A 386-amino-acid polypeptide reads, in one-letter code: Succinate--CoA ligase [ADP-forming] subunit beta (386 aa).

One can recognise an ATP-grasp domain in the interval 9-244 (KELLKQFGVT…LDEEDPAEIE (236 aa)). ATP contacts are provided by residues Lys-46, 53–55 (GRG), Glu-99, Ala-102, and Glu-107. Residues Asn-199 and Asp-213 each contribute to the Mg(2+) site. Substrate-binding positions include Asn-264 and 321-323 (GIM).

The protein belongs to the succinate/malate CoA ligase beta subunit family. In terms of assembly, heterotetramer of two alpha and two beta subunits. Mg(2+) serves as cofactor.

It carries out the reaction succinate + ATP + CoA = succinyl-CoA + ADP + phosphate. The enzyme catalyses GTP + succinate + CoA = succinyl-CoA + GDP + phosphate. Its pathway is carbohydrate metabolism; tricarboxylic acid cycle; succinate from succinyl-CoA (ligase route): step 1/1. In terms of biological role, succinyl-CoA synthetase functions in the citric acid cycle (TCA), coupling the hydrolysis of succinyl-CoA to the synthesis of either ATP or GTP and thus represents the only step of substrate-level phosphorylation in the TCA. The beta subunit provides nucleotide specificity of the enzyme and binds the substrate succinate, while the binding sites for coenzyme A and phosphate are found in the alpha subunit. This Bordetella pertussis (strain Tohama I / ATCC BAA-589 / NCTC 13251) protein is Succinate--CoA ligase [ADP-forming] subunit beta.